The chain runs to 240 residues: LexA repressor (240 aa).

The segment at residues 26–46 (FDEMKEALDLASKSGIHRLIT) is a DNA-binding region (H-T-H motif). Catalysis depends on for autocatalytic cleavage activity residues serine 161 and lysine 199.

It belongs to the peptidase S24 family. As to quaternary structure, homodimer.

It catalyses the reaction Hydrolysis of Ala-|-Gly bond in repressor LexA.. Represses a number of genes involved in the response to DNA damage (SOS response), including recA and lexA. In the presence of single-stranded DNA, RecA interacts with LexA causing an autocatalytic cleavage which disrupts the DNA-binding part of LexA, leading to derepression of the SOS regulon and eventually DNA repair. This is LexA repressor from Brucella ovis (strain ATCC 25840 / 63/290 / NCTC 10512).